The chain runs to 706 residues: Paxillin-like protein 1 (706 aa).

4 disordered regions span residues 24–192 (ERAG…EQDL), 222–258 (VLDQKLGKEQQKEESSIEYESEGQQEDENDIESLNFE), 279–341 (AKQE…TKVE), and 514–537 (IDNSKSNDSHVLPNGGTTRYSSDA). Positions 35–64 (PFSSQRNASTGSLQASVKSPPITRQRNVSA) are enriched in polar residues. A phosphoserine mark is found at Ser43 and Ser63. Composition is skewed to low complexity over residues 73–86 (KSAYTASSKSAYSS) and 117–129 (SSRPSDISRSISR). Composition is skewed to basic and acidic residues over residues 130–150 (PSERASQEDPFRFERDLDRQA) and 222–236 (VLDQKLGKEQQKEES). Over residues 237-252 (SIEYESEGQQEDENDI) the composition is skewed to acidic residues. Residues 279–290 (AKQEEKNTEPKI) show a composition bias toward basic and acidic residues. Residues 296 to 308 (TRESNTPSLTMNA) are compositionally biased toward polar residues. 2 LIM zinc-binding domains span residues 556–612 (CRAC…CQKH) and 621–672 (CKVC…CGNH).

The sequence is that of Paxillin-like protein 1 (PXL1) from Saccharomyces cerevisiae (strain ATCC 204508 / S288c) (Baker's yeast).